Reading from the N-terminus, the 215-residue chain is Phosphoserine phosphatase (215 aa).

Asp11 functions as the Nucleophile in the catalytic mechanism. Mg(2+) contacts are provided by Asp11 and Asp13. Asp13 acts as the Proton donor in catalysis. Residues Glu20, Arg56, 99-100, and Lys144 contribute to the substrate site; that span reads SG. Asp167 provides a ligand contact to Mg(2+). Asn170 provides a ligand contact to substrate.

Belongs to the HAD-like hydrolase superfamily. SerB family. Mg(2+) is required as a cofactor.

The enzyme catalyses O-phospho-L-serine + H2O = L-serine + phosphate. The catalysed reaction is O-phospho-D-serine + H2O = D-serine + phosphate. It functions in the pathway amino-acid biosynthesis; L-serine biosynthesis; L-serine from 3-phospho-D-glycerate: step 3/3. The chain is Phosphoserine phosphatase from Streptococcus thermophilus (strain ATCC BAA-250 / LMG 18311).